We begin with the raw amino-acid sequence, 187 residues long: Large ribosomal subunit protein uL22 (187 aa).

The disordered stretch occupies residues 155-187 (DAVSRAAPTDDAPAKKKLSKKKLARQKEKMMRE). Basic residues predominate over residues 169-178 (KKKLSKKKLA).

The protein belongs to the universal ribosomal protein uL22 family.

The polypeptide is Large ribosomal subunit protein uL22 (RpL17) (Lonomia obliqua (Moth)).